The sequence spans 78 residues: D-alanyl carrier protein (78 aa).

The Carrier domain maps to 1–78 (MEFREQVLDL…KIVEALEELR (78 aa)). Ser36 is subject to O-(pantetheine 4'-phosphoryl)serine.

Belongs to the DltC family. In terms of processing, 4'-phosphopantetheine is transferred from CoA to a specific serine of apo-DCP.

It is found in the cytoplasm. It functions in the pathway cell wall biogenesis; lipoteichoic acid biosynthesis. In terms of biological role, carrier protein involved in the D-alanylation of lipoteichoic acid (LTA). The loading of thioester-linked D-alanine onto DltC is catalyzed by D-alanine--D-alanyl carrier protein ligase DltA. The DltC-carried D-alanyl group is further transferred to cell membrane phosphatidylglycerol (PG) by forming an ester bond, probably catalyzed by DltD. D-alanylation of LTA plays an important role in modulating the properties of the cell wall in Gram-positive bacteria, influencing the net charge of the cell wall. The polypeptide is D-alanyl carrier protein (Staphylococcus epidermidis (strain ATCC 35984 / DSM 28319 / BCRC 17069 / CCUG 31568 / BM 3577 / RP62A)).